The chain runs to 38 residues: Potassium channel toxin alpha-KTx 3.17 (38 aa).

3 cysteine pairs are disulfide-bonded: Cys8-Cys28, Cys14-Cys33, and Cys18-Cys35.

Belongs to the short scorpion toxin superfamily. Potassium channel inhibitor family. Alpha-KTx 03 subfamily. As to expression, expressed by the venom gland.

It localises to the secreted. In terms of biological role, completely inhibits the (125)I-kaliotoxin binding on rat brain synaptosomes with high-affinity (IC(50)=0.1 nM). Is a potent Kv1.3/KCNA3 ligand. The protein is Potassium channel toxin alpha-KTx 3.17 of Buthus paris (Scorpion).